We begin with the raw amino-acid sequence, 176 residues long: Ribosome maturation factor RimM (176 aa).

The PRC barrel domain maps to 97–176; that stretch reads EDEFYWRDLI…QILVDWDPDF (80 aa).

Belongs to the RimM family. In terms of assembly, binds ribosomal protein uS19.

It is found in the cytoplasm. An accessory protein needed during the final step in the assembly of 30S ribosomal subunit, possibly for assembly of the head region. Essential for efficient processing of 16S rRNA. May be needed both before and after RbfA during the maturation of 16S rRNA. It has affinity for free ribosomal 30S subunits but not for 70S ribosomes. This is Ribosome maturation factor RimM from Shewanella halifaxensis (strain HAW-EB4).